A 282-amino-acid polypeptide reads, in one-letter code: Secretory carrier-associated membrane protein 3 (282 aa).

Positions 1 to 36 are disordered; the sequence is MAGKHGRNGFEDDDVNPFAGGSVPPANNSRLPPLSH. Residues 1–117 lie on the Cytoplasmic side of the membrane; it reads MAGKHGRNGF…EIPIHLQRMQ (117 aa). A coiled-coil region spans residues 48–92; sequence LDSSKDLKKKEKELQAMEAELNKRERELKRKEEAAAQAGIVIEDK. A run of 4 helical transmembrane segments spans residues 118–138, 148–168, 185–205, and 230–250; these read YLAFSSFLGLAACLFWNIIAT, VIIWLLAIIYFISGVPGAYVL, FGWFFLFYLIHIIFCVWAAVA, and IVGIFYFVGFGLFCLESLLSI. The Cytoplasmic portion of the chain corresponds to 251–282; the sequence is GVIQQVYMYFRGSGKAAEMKREAARGALSSAF.

This sequence belongs to the SCAMP family.

It localises to the cell membrane. The protein localises to the cytoplasmic vesicle. The protein resides in the secretory vesicle membrane. Its function is as follows. Probably involved in membrane trafficking. The chain is Secretory carrier-associated membrane protein 3 (SCAMP3) from Oryza sativa subsp. japonica (Rice).